A 163-amino-acid polypeptide reads, in one-letter code: Ribosome maturation factor RimP (163 aa).

The tract at residues 66–85 (ALDRDDPVPGPPYELEVSSP) is disordered.

Belongs to the RimP family.

The protein localises to the cytoplasm. Its function is as follows. Required for maturation of 30S ribosomal subunits. The protein is Ribosome maturation factor RimP of Kocuria rhizophila (strain ATCC 9341 / DSM 348 / NBRC 103217 / DC2201).